Reading from the N-terminus, the 102-residue chain is uncharacterized protein (102 aa).

The helical transmembrane segment at 77–96 (FFSACVAKSYSSFFISICIL) threads the bilayer.

The protein resides in the membrane. This is an uncharacterized protein from Saccharomyces cerevisiae (strain ATCC 204508 / S288c) (Baker's yeast).